Consider the following 671-residue polypeptide: DNA ligase (671 aa).

NAD(+) contacts are provided by residues 32–36, 81–82, and Glu-113; these read DAEYD and SL. The N6-AMP-lysine intermediate role is filled by Lys-115. 4 residues coordinate NAD(+): Arg-136, Glu-173, Lys-290, and Lys-314. 4 residues coordinate Zn(2+): Cys-408, Cys-411, Cys-426, and Cys-432. Residues 593-671 enclose the BRCT domain; the sequence is EIDSPFAGKT…EAEMIRLLGA (79 aa).

This sequence belongs to the NAD-dependent DNA ligase family. LigA subfamily. Requires Mg(2+) as cofactor. The cofactor is Mn(2+).

It catalyses the reaction NAD(+) + (deoxyribonucleotide)n-3'-hydroxyl + 5'-phospho-(deoxyribonucleotide)m = (deoxyribonucleotide)n+m + AMP + beta-nicotinamide D-nucleotide.. Functionally, DNA ligase that catalyzes the formation of phosphodiester linkages between 5'-phosphoryl and 3'-hydroxyl groups in double-stranded DNA using NAD as a coenzyme and as the energy source for the reaction. It is essential for DNA replication and repair of damaged DNA. The polypeptide is DNA ligase (Salmonella typhi).